The primary structure comprises 604 residues: MEERGFMSPSLAISASYREGGSKGMSRRRSMRPSFDADNEFMNLLHGSDPVRIELNRLENEVRDKDRELSEGQAEIKALRLSERQREKAVEELTEELGKMAEKLKLIENLLESKNLEIKKINEEKKASMAAQFAAEASLRRVHAAQKDDDMPPIEAILAPLEAELKLSRQEIAKLQDDNKSLDRLTKSKEAALLDAERTVQSALAKASMVDDLQNKNQELMKQIEICQEENRIIDKMHRQKVAEVEKLMQSVRELEEAVLAGGAAANAVRDYQRKFQEMNEERKILERELARAKVNANRVATVVANEWKDSNDKVMPVRQWLEERRFLQGEMQQLRDKLAIADRAAKSEAQLKEKFLLRLRVLEESLKGPTSSSSRGTSVGRSSSNGPTRRQSLGGAETSPKITSNGSLIKRTPSSQLRSLTASASTVLKHAKGTSRSFDGGTRSLDRSKVLINGPRSNFPLNHKSSEGTSRGESPSSIKGEEESADKATNNDSVPGVLYDLLQKEVITLRKAAHEKDQSLRDKDEAIEMLAKKVETLTKAMDVEAKKMRREVAVMGKEVAAMRVVDKGQQDSKTRRLSVSKGNTAQLLSGRVSGRIGMTRSTQ.

Positions 1–33 (MEERGFMSPSLAISASYREGGSKGMSRRRSMRP) are disordered. The stretch at 49–351 (DPVRIELNRL…ADRAAKSEAQ (303 aa)) forms a coiled coil. The tract at residues 233–470 (IIDKMHRQKV…PLNHKSSEGT (238 aa)) is required for targeting to microtubules. 2 disordered regions span residues 367–422 (LKGP…RSLT) and 434–495 (GTSR…NDSV). Over residues 371–385 (TSSSSRGTSVGRSSS) the composition is skewed to low complexity. Polar residues-rich tracts occupy residues 401–422 (PKIT…RSLT) and 468–478 (EGTSRGESPSS). Residues 521-569 (LRDKDEAIEMLAKKVETLTKAMDVEAKKMRREVAVMGKEVAAMRVVDKG) adopt a coiled-coil conformation.

It belongs to the MAP70 family.

The protein localises to the cytoplasm. The protein resides in the cytoskeleton. Plant-specific protein that interact with microtubules. The sequence is that of Microtubule-associated protein 70-4 (MAP70.4) from Arabidopsis thaliana (Mouse-ear cress).